A 544-amino-acid chain; its full sequence is 4-coumarate--CoA ligase 1 (544 aa).

Positions 190, 191, 192, 193, 194, and 198 each coordinate ATP. Y240 contributes to the (E)-4-coumaroyl-AMP binding site. Residue K261 coordinates CoA. Residues 263 to 332 (DIVPFLELIQ…AKFPNAKLGQ (70 aa)) form an SBD1 region. A310, Q332, G333, T337, and M345 together coordinate (E)-4-coumaroyl-AMP. ATP-binding residues include Q332, G333, and T337. The interval 333-400 (GYGMTEAGPV…IRGDQIMKGY (68 aa)) is SBD2. D421 and R436 together coordinate ATP. Positions 438 and 442 each coordinate (E)-4-coumaroyl-AMP. The CoA site is built by K444 and G445. Position 527 (K527) interacts with ATP.

Belongs to the ATP-dependent AMP-binding enzyme family. The cofactor is Mg(2+).

The catalysed reaction is (E)-4-coumarate + ATP + CoA = (E)-4-coumaroyl-CoA + AMP + diphosphate. It carries out the reaction (E)-4-coumarate + ATP + H(+) = (E)-4-coumaroyl-AMP + diphosphate. The enzyme catalyses (E)-4-coumaroyl-AMP + CoA = (E)-4-coumaroyl-CoA + AMP + H(+). It participates in phytoalexin biosynthesis; 3,4',5-trihydroxystilbene biosynthesis; 3,4',5-trihydroxystilbene from trans-4-coumarate: step 1/2. Carboxylate--CoA ligase that may use 4-coumarate as substrate. Follows a two-step reaction mechanism, wherein the carboxylate substrate first undergoes adenylation by ATP, followed by a thioesterification in the presence of CoA to yield the final CoA thioester. This is 4-coumarate--CoA ligase 1 (4CL1) from Petroselinum crispum (Parsley).